A 203-amino-acid polypeptide reads, in one-letter code: UPF0637 protein SERP0693 (203 aa).

Belongs to the UPF0637 family.

The chain is UPF0637 protein SERP0693 from Staphylococcus epidermidis (strain ATCC 35984 / DSM 28319 / BCRC 17069 / CCUG 31568 / BM 3577 / RP62A).